A 349-amino-acid chain; its full sequence is tRNA pseudouridine synthase D (349 aa).

Phenylalanine 27 serves as a coordination point for substrate. Aspartate 80 functions as the Nucleophile in the catalytic mechanism. Asparagine 129 lines the substrate pocket. The TRUD domain maps to 155–303 (GVPNYFGAQR…VEAARRAMLL (149 aa)). A substrate-binding site is contributed by phenylalanine 329.

Belongs to the pseudouridine synthase TruD family.

The catalysed reaction is uridine(13) in tRNA = pseudouridine(13) in tRNA. Responsible for synthesis of pseudouridine from uracil-13 in transfer RNAs. The sequence is that of tRNA pseudouridine synthase D from Escherichia coli O127:H6 (strain E2348/69 / EPEC).